Reading from the N-terminus, the 277-residue chain is Putative phosphoenolpyruvate synthase regulatory protein (277 aa).

ADP is bound at residue 152 to 159 (GVSRCGKT).

This sequence belongs to the pyruvate, phosphate/water dikinase regulatory protein family. PSRP subfamily.

It carries out the reaction [pyruvate, water dikinase] + ADP = [pyruvate, water dikinase]-phosphate + AMP + H(+). It catalyses the reaction [pyruvate, water dikinase]-phosphate + phosphate + H(+) = [pyruvate, water dikinase] + diphosphate. Bifunctional serine/threonine kinase and phosphorylase involved in the regulation of the phosphoenolpyruvate synthase (PEPS) by catalyzing its phosphorylation/dephosphorylation. The sequence is that of Putative phosphoenolpyruvate synthase regulatory protein from Chromohalobacter salexigens (strain ATCC BAA-138 / DSM 3043 / CIP 106854 / NCIMB 13768 / 1H11).